The primary structure comprises 310 residues: Putative S-adenosyl-L-methionine-dependent methyltransferase Mb0151 (310 aa).

S-adenosyl-L-methionine-binding positions include aspartate 132 and 161-162 (DL).

Belongs to the UPF0677 family.

In terms of biological role, exhibits S-adenosyl-L-methionine-dependent methyltransferase activity. This Mycobacterium bovis (strain ATCC BAA-935 / AF2122/97) protein is Putative S-adenosyl-L-methionine-dependent methyltransferase Mb0151.